We begin with the raw amino-acid sequence, 417 residues long: Acid phosphatase (417 aa).

An N-terminal signal peptide occupies residues 1 to 19 (MFTKQSLVTLLGGLSLAVA). 3 N-linked (GlcNAc...) asparagine glycosylation sites follow: N122, N187, and N209. The active-site Proton donor is D216. N-linked (GlcNAc...) asparagine glycosylation is found at N218, N333, and N383.

The N-terminus is blocked.

The protein localises to the secreted. The catalysed reaction is a phosphate monoester + H2O = an alcohol + phosphate. The chain is Acid phosphatase (phoA) from Aspergillus niger.